The following is a 215-amino-acid chain: Proteasome subunit beta inpE (215 aa).

This sequence belongs to the peptidase T1B family.

Its subcellular location is the cytoplasm. The protein resides in the nucleus. The enzyme catalyses Cleavage of peptide bonds with very broad specificity.. In terms of biological role, proteasome subunit beta type-6; part of the inp gene cluster that mediates the biosynthesis of fellutamide B, a mycotoxin that acts as a proteasome inhibitor. In the first step of fellutabmide B biosynthesis inpC activates 3-hydroxydodecanoic acid to generate 3-hydroxydodecanoyl-AMP that is then loaded onto the T0 domain of inpB. The 3-hydroxydodecanoyl-S-phosphopantetheinyl-T0 is sequentially extended with L-Asn and L-Gln by the two CAT modules of inpB. The linear lipodipeptide from inpB is then transferred onto inpA for the addition of the third amino acid, L-Leu. Reductive releasing of the lipotripeptide by the TE domain of inpA produces (2S)-fellutamide B. InpF might be involved in the release and transfer of the lipodipeptide from inpB to inpA. The inp cluster-encoded proteasome subunit inpE confers resistance to internally produced fellutamides. The MFS efflux transporter inpD may contribute to fellutamide resistance as well. The protein is Proteasome subunit beta inpE (inpE) of Emericella nidulans (strain FGSC A4 / ATCC 38163 / CBS 112.46 / NRRL 194 / M139) (Aspergillus nidulans).